Reading from the N-terminus, the 383-residue chain is Heme chaperone HemW (383 aa).

A Radical SAM core domain is found at 1–241; that stretch reads MPKLPPLSLY…LTMAGYQQYE (241 aa). Position 10 (Tyr-10) interacts with S-adenosyl-L-methionine. [4Fe-4S] cluster contacts are provided by Cys-16, Cys-20, and Cys-23. S-adenosyl-L-methionine contacts are provided by residues Gly-70, 71-72, Glu-103, Gln-130, Arg-142, and Asp-167; that span reads GT.

This sequence belongs to the anaerobic coproporphyrinogen-III oxidase family. HemW subfamily. The cofactor is [4Fe-4S] cluster.

The protein localises to the cytoplasm. In terms of biological role, probably acts as a heme chaperone, transferring heme to an unknown acceptor. Binds one molecule of heme per monomer, possibly covalently. Binds 1 [4Fe-4S] cluster. The cluster is coordinated with 3 cysteines and an exchangeable S-adenosyl-L-methionine. This Haemophilus influenzae (strain ATCC 51907 / DSM 11121 / KW20 / Rd) protein is Heme chaperone HemW.